We begin with the raw amino-acid sequence, 179 residues long: tRNA (cytidine(56)-2'-O)-methyltransferase (179 aa).

S-adenosyl-L-methionine contacts are provided by residues L82, 110-114, and 128-135; these read GAEKV and VGNQPHSE.

This sequence belongs to the aTrm56 family. In terms of assembly, homodimer.

It is found in the cytoplasm. It catalyses the reaction cytidine(56) in tRNA + S-adenosyl-L-methionine = 2'-O-methylcytidine(56) in tRNA + S-adenosyl-L-homocysteine + H(+). In terms of biological role, specifically catalyzes the AdoMet-dependent 2'-O-ribose methylation of cytidine at position 56 in tRNAs. The polypeptide is tRNA (cytidine(56)-2'-O)-methyltransferase (Methanocaldococcus jannaschii (strain ATCC 43067 / DSM 2661 / JAL-1 / JCM 10045 / NBRC 100440) (Methanococcus jannaschii)).